The chain runs to 115 residues: Large ribosomal subunit protein uL18 (115 aa).

This sequence belongs to the universal ribosomal protein uL18 family. As to quaternary structure, part of the 50S ribosomal subunit; part of the 5S rRNA/L5/L18/L25 subcomplex. Contacts the 5S and 23S rRNAs.

Functionally, this is one of the proteins that bind and probably mediate the attachment of the 5S RNA into the large ribosomal subunit, where it forms part of the central protuberance. The polypeptide is Large ribosomal subunit protein uL18 (Rickettsia rickettsii (strain Iowa)).